Consider the following 163-residue polypeptide: Protein-export protein SecB (163 aa).

This sequence belongs to the SecB family. In terms of assembly, homotetramer, a dimer of dimers. One homotetramer interacts with 1 SecA dimer.

The protein localises to the cytoplasm. One of the proteins required for the normal export of preproteins out of the cell cytoplasm. It is a molecular chaperone that binds to a subset of precursor proteins, maintaining them in a translocation-competent state. It also specifically binds to its receptor SecA. In Shewanella woodyi (strain ATCC 51908 / MS32), this protein is Protein-export protein SecB.